A 393-amino-acid polypeptide reads, in one-letter code: Metal tolerance protein C2 (393 aa).

Residues 1–23 (MERSISFNPRGDNELPDDRSSDV) are disordered. Residues 1 to 113 (MERSISFNPR…VTSGNRQMKR (113 aa)) are Cytoplasmic-facing. Residues 11–21 (GDNELPDDRSS) are compositionally biased toward basic and acidic residues. The helical transmembrane segment at 114–134 (LFLLIALNVLYSTTELSIGIF) threads the bilayer. Over 135 to 139 (TGRVG) the chain is Vacuolar. A helical membrane pass occupies residues 140–160 (LVSDAFHLTFGCGLLTFSLFA). The Cytoplasmic segment spans residues 161–186 (MATSRKKPDHAYSYGYKRLEVLSAFT). Residues 187 to 207 (NALFLMFMSFSLAVEALHAFI) traverse the membrane as a helical segment. Residues 208-214 (QDESEHK) are Vacuolar-facing. A helical transmembrane segment spans residues 215-235 (HYLIVSAVTNLLVNLLGVWFF). The Cytoplasmic portion of the chain corresponds to 236-259 (RNYARVNIAYRKAEDMNYHSVCLH). The helical transmembrane segment at 260-280 (VISDSIRSAGLILASWLLSLG) threads the bilayer. Over 281–283 (VEN) the chain is Vacuolar. The chain crosses the membrane as a helical span at residues 284–304 (AEVLCLGLVSVTVFMLVMPLF). Residues 305-393 (KATGGVLLQM…QDLTLQTDYT (89 aa)) lie on the Cytoplasmic side of the membrane.

The protein belongs to the cation diffusion facilitator (CDF) transporter (TC 2.A.4) family.

Its subcellular location is the vacuole membrane. In terms of biological role, involved in sequestration of excess metal in the cytoplasm into vacuoles to maintain metal homeostasis. The sequence is that of Metal tolerance protein C2 (MTPC2) from Arabidopsis thaliana (Mouse-ear cress).